We begin with the raw amino-acid sequence, 177 residues long: Large ribosomal subunit protein uL6 (177 aa).

Belongs to the universal ribosomal protein uL6 family. In terms of assembly, part of the 50S ribosomal subunit.

Its function is as follows. This protein binds to the 23S rRNA, and is important in its secondary structure. It is located near the subunit interface in the base of the L7/L12 stalk, and near the tRNA binding site of the peptidyltransferase center. The protein is Large ribosomal subunit protein uL6 of Chelativorans sp. (strain BNC1).